Reading from the N-terminus, the 491-residue chain is Acetyl-coenzyme A carboxylase carboxyl transferase subunit beta, chloroplastic (491 aa).

A CoA carboxyltransferase N-terminal domain is found at 229–491; the sequence is LWVQCENCYG…FQLHGFFPLT (263 aa). Positions 233, 236, 252, and 255 each coordinate Zn(2+). The segment at 233–255 adopts a C4-type zinc-finger fold; that stretch reads CENCYGLNYKQFFRSRLNICEHC.

It belongs to the AccD/PCCB family. Acetyl-CoA carboxylase is a heterohexamer composed of biotin carboxyl carrier protein, biotin carboxylase and 2 subunits each of ACCase subunit alpha and ACCase plastid-coded subunit beta (accD). Zn(2+) is required as a cofactor.

It localises to the plastid. The protein localises to the chloroplast stroma. The catalysed reaction is N(6)-carboxybiotinyl-L-lysyl-[protein] + acetyl-CoA = N(6)-biotinyl-L-lysyl-[protein] + malonyl-CoA. It participates in lipid metabolism; malonyl-CoA biosynthesis; malonyl-CoA from acetyl-CoA: step 1/1. Its function is as follows. Component of the acetyl coenzyme A carboxylase (ACC) complex. Biotin carboxylase (BC) catalyzes the carboxylation of biotin on its carrier protein (BCCP) and then the CO(2) group is transferred by the transcarboxylase to acetyl-CoA to form malonyl-CoA. In Lemna minor (Common duckweed), this protein is Acetyl-coenzyme A carboxylase carboxyl transferase subunit beta, chloroplastic.